Consider the following 374-residue polypeptide: Chorismate synthase (374 aa).

Arg-55 serves as a coordination point for NADP(+). FMN is bound by residues 132-134 (RGS), Gly-293, 308-312 (KPTPS), and Arg-335.

It belongs to the chorismate synthase family. Requires FMNH2 as cofactor.

It carries out the reaction 5-O-(1-carboxyvinyl)-3-phosphoshikimate = chorismate + phosphate. The protein operates within metabolic intermediate biosynthesis; chorismate biosynthesis; chorismate from D-erythrose 4-phosphate and phosphoenolpyruvate: step 7/7. In terms of biological role, catalyzes the anti-1,4-elimination of the C-3 phosphate and the C-6 proR hydrogen from 5-enolpyruvylshikimate-3-phosphate (EPSP) to yield chorismate, which is the branch point compound that serves as the starting substrate for the three terminal pathways of aromatic amino acid biosynthesis. This reaction introduces a second double bond into the aromatic ring system. The protein is Chorismate synthase of Methanothermobacter thermautotrophicus (strain ATCC 29096 / DSM 1053 / JCM 10044 / NBRC 100330 / Delta H) (Methanobacterium thermoautotrophicum).